A 471-amino-acid polypeptide reads, in one-letter code: NADH-quinone oxidoreductase subunit N (471 aa).

14 consecutive transmembrane segments (helical) span residues 6 to 26 (FILP…LGVY), 30 to 50 (SSNI…ILIF), 70 to 90 (LSSF…SIST), 98 to 118 (IFLI…MVMI), 123 to 143 (LMVF…LASF), 158 to 178 (FVLS…VYGF), 198 to 218 (LTFG…AVPF), 230 to 250 (PTAV…TVFI), 264 to 284 (WQPI…IAAI), 292 to 312 (LIAY…STGS), 320 to 340 (IVYM…LLML), 365 to 385 (LSLL…GFFA), 400 to 420 (FLAI…LKII), and 438 to 458 (IWLK…FIFP).

The protein belongs to the complex I subunit 2 family. NDH-1 is composed of 14 different subunits. Subunits NuoA, H, J, K, L, M, N constitute the membrane sector of the complex.

The protein localises to the cell inner membrane. It catalyses the reaction a quinone + NADH + 5 H(+)(in) = a quinol + NAD(+) + 4 H(+)(out). NDH-1 shuttles electrons from NADH, via FMN and iron-sulfur (Fe-S) centers, to quinones in the respiratory chain. The immediate electron acceptor for the enzyme in this species is believed to be ubiquinone. Couples the redox reaction to proton translocation (for every two electrons transferred, four hydrogen ions are translocated across the cytoplasmic membrane), and thus conserves the redox energy in a proton gradient. The sequence is that of NADH-quinone oxidoreductase subunit N from Pelagibacter ubique (strain HTCC1062).